Reading from the N-terminus, the 296-residue chain is Sulfotransferase 1B1 (296 aa).

48-53 (KSGTTW) lines the 3'-phosphoadenylyl sulfate pocket. 107-109 (KTH) lines the substrate pocket. Catalysis depends on H109, which acts as the Proton acceptor. 3'-phosphoadenylyl sulfate contacts are provided by residues R131, S139, Y194, 228 to 233 (TSFEMM), and 258 to 260 (RKG).

It belongs to the sulfotransferase 1 family. Expressed highly in the colon, kidney and small intestine of male and female dogs. Highly expressed in the jejunum and ileum of the male dog than the female dog, which displayed more expression in duodenum (at protein level).

It is found in the cytoplasm. It carries out the reaction a phenol + 3'-phosphoadenylyl sulfate = an aryl sulfate + adenosine 3',5'-bisphosphate + H(+). The catalysed reaction is 3,3',5-triiodo-L-thyronine + 3'-phosphoadenylyl sulfate = 3,3',5-triiodo-L-thyronine sulfate + adenosine 3',5'-bisphosphate + H(+). It catalyses the reaction 3,3',5'-triiodo-L-thyronine + 3'-phosphoadenylyl sulfate = 3,3',5'-triiodo-L-thyronine sulfate + adenosine 3',5'-bisphosphate + H(+). The enzyme catalyses 3,3'-diiodo-L-thyronine + 3'-phosphoadenylyl sulfate = 3,3'-diiodo-L-thyronine sulfate + adenosine 3',5'-bisphosphate + H(+). It carries out the reaction 4-ethylphenol + 3'-phosphoadenylyl sulfate = 4-ethylphenyl sulfate + adenosine 3',5'-bisphosphate + H(+). Its function is as follows. Sulfotransferase that utilizes 3'-phospho-5'-adenylyl sulfate (PAPS) as sulfonate donor to catalyze the sulfate conjugation of dopamine, small phenols such as 1-naphthol and p-nitrophenol and thyroid hormones, including 3,3'-diiodothyronine, triidothyronine (T3) and reverse triiodothyronine (rT3). May play a role in gut microbiota-host metabolic interaction. O-sulfonates 4-ethylphenol (4-EP), a dietary tyrosine-derived metabolite produced by gut bacteria. The product 4-EPS crosses the blood-brain barrier and may negatively regulate oligodendrocyte maturation and myelination, affecting the functional connectivity of different brain regions associated with the limbic system. The protein is Sulfotransferase 1B1 (SULT1B1) of Canis lupus familiaris (Dog).